We begin with the raw amino-acid sequence, 339 residues long: MVREEVAGSTQTLQWKCVESRVDSKRLYYGRFILSPLRKGQADTVGIALRRALLGEIEGTCITRAKFGSVPHEYSTIAGIEESVQEILLNLKEIVLRSNLYGVRDASICVKGPRYITAQDIILPPSVEIVDTAQPIANLTEPIDFCIDLQIKRDRGYQTELRKNYQDGSYPIDAVSMPVRNVNYSIFSCGNGNEKHEILFLEIWTNGSLTPKEALYEASRNLIDLFLPFLHAEEEGTSFEENKNRFTPPLFTFKKRLTNLKKNKKGIPLNCIFIDQLELTSRTYNCLKRANIHTLLDLLSKTEEDLLRIDSFRMEDRKHIWDTLEKHLPIDLLKNKLSF.

An alpha N-terminal domain (alpha-NTD) region spans residues 1–233; that stretch reads MVREEVAGST…DLFLPFLHAE (233 aa). The interval 264-339 is alpha C-terminal domain (alpha-CTD); it reads KKGIPLNCIF…IDLLKNKLSF (76 aa).

This sequence belongs to the RNA polymerase alpha chain family. In terms of assembly, in plastids the minimal PEP RNA polymerase catalytic core is composed of four subunits: alpha, beta, beta', and beta''. When a (nuclear-encoded) sigma factor is associated with the core the holoenzyme is formed, which can initiate transcription.

The protein localises to the plastid. It is found in the chloroplast. It carries out the reaction RNA(n) + a ribonucleoside 5'-triphosphate = RNA(n+1) + diphosphate. In terms of biological role, DNA-dependent RNA polymerase catalyzes the transcription of DNA into RNA using the four ribonucleoside triphosphates as substrates. The protein is DNA-directed RNA polymerase subunit alpha of Eremopyrum distans.